Consider the following 346-residue polypeptide: Small ribosomal subunit biogenesis GTPase RsgA 1 (346 aa).

The CP-type G domain occupies 93–248; the sequence is AEQLIAANFD…VIDTPGMREF (156 aa). GTP is bound by residues 138–141 and 190–198; these read TKAD and GSSGVGKSS. Zn(2+) is bound by residues C271, C276, H278, and C284.

The protein belongs to the TRAFAC class YlqF/YawG GTPase family. RsgA subfamily. Monomer. Associates with 30S ribosomal subunit, binds 16S rRNA. Requires Zn(2+) as cofactor.

The protein resides in the cytoplasm. Functionally, one of several proteins that assist in the late maturation steps of the functional core of the 30S ribosomal subunit. Helps release RbfA from mature subunits. May play a role in the assembly of ribosomal proteins into the subunit. Circularly permuted GTPase that catalyzes slow GTP hydrolysis, GTPase activity is stimulated by the 30S ribosomal subunit. This Listeria monocytogenes serovar 1/2a (strain ATCC BAA-679 / EGD-e) protein is Small ribosomal subunit biogenesis GTPase RsgA 1.